The chain runs to 469 residues: uncharacterized protein (469 aa).

In terms of domain architecture, HTH gntR-type spans 13–81; sequence TPLYEQLYTF…PKIGWFAAEV (69 aa). The segment at residues 41-60 is a DNA-binding region (H-T-H motif); it reads KRRLSSLLDVSTATIERAYE. K309 bears the N6-(pyridoxal phosphate)lysine mark.

This sequence in the C-terminal section; belongs to the class-I pyridoxal-phosphate-dependent aminotransferase family. It depends on pyridoxal 5'-phosphate as a cofactor.

This is an uncharacterized protein from Bacillus subtilis (strain 168).